The following is a 277-amino-acid chain: Ribosomal RNA small subunit methyltransferase A (277 aa).

Residues N27, L29, G54, E75, D95, and N118 each coordinate S-adenosyl-L-methionine.

This sequence belongs to the class I-like SAM-binding methyltransferase superfamily. rRNA adenine N(6)-methyltransferase family. RsmA subfamily.

It is found in the cytoplasm. It catalyses the reaction adenosine(1518)/adenosine(1519) in 16S rRNA + 4 S-adenosyl-L-methionine = N(6)-dimethyladenosine(1518)/N(6)-dimethyladenosine(1519) in 16S rRNA + 4 S-adenosyl-L-homocysteine + 4 H(+). Specifically dimethylates two adjacent adenosines (A1518 and A1519) in the loop of a conserved hairpin near the 3'-end of 16S rRNA in the 30S particle. May play a critical role in biogenesis of 30S subunits. This chain is Ribosomal RNA small subunit methyltransferase A, found in Chlamydia muridarum (strain MoPn / Nigg).